The chain runs to 433 residues: Adenylosuccinate synthetase (433 aa).

GTP-binding positions include 13–19 (GDEGKGK) and 41–43 (GHT). Catalysis depends on Asp-14, which acts as the Proton acceptor. Positions 14 and 41 each coordinate Mg(2+). IMP contacts are provided by residues 14–17 (DEGK), 39–42 (NAGH), Thr-130, Arg-144, Gln-225, Thr-240, and Arg-304. The Proton donor role is filled by His-42. 300–306 (STTGRKR) contacts substrate. GTP contacts are provided by residues Arg-306, 332 to 334 (KLD), and 414 to 416 (STG).

The protein belongs to the adenylosuccinate synthetase family. Homodimer. The cofactor is Mg(2+).

It is found in the cytoplasm. The catalysed reaction is IMP + L-aspartate + GTP = N(6)-(1,2-dicarboxyethyl)-AMP + GDP + phosphate + 2 H(+). It functions in the pathway purine metabolism; AMP biosynthesis via de novo pathway; AMP from IMP: step 1/2. Plays an important role in the de novo pathway of purine nucleotide biosynthesis. Catalyzes the first committed step in the biosynthesis of AMP from IMP. The polypeptide is Adenylosuccinate synthetase (Buchnera aphidicola subsp. Acyrthosiphon pisum (strain APS) (Acyrthosiphon pisum symbiotic bacterium)).